The chain runs to 183 residues: Negative modulator of initiation of replication (183 aa).

Residues 43–70 (VNDTQPVSAPAPSKAAPSAGNESRPQDR) form a disordered region. Low complexity predominate over residues 50–61 (SAPAPSKAAPSA). Interaction with DNA stretches follow at residues 89–90 (AV), 118–122 (RTRIY), and 152–158 (NTNTGRK).

It belongs to the SeqA family. Homodimer. Polymerizes to form helical filaments.

It is found in the cytoplasm. In terms of biological role, negative regulator of replication initiation, which contributes to regulation of DNA replication and ensures that replication initiation occurs exactly once per chromosome per cell cycle. Binds to pairs of hemimethylated GATC sequences in the oriC region, thus preventing assembly of replication proteins and re-initiation at newly replicated origins. Repression is relieved when the region becomes fully methylated. This Pantoea ananatis (strain AJ13355) protein is Negative modulator of initiation of replication.